Reading from the N-terminus, the 630-residue chain is Vacuolar protein 8 (630 aa).

A lipid anchor (N-myristoyl glycine) is attached at G2. 9 ARM repeats span residues 74–115 (EITE…NLAV), 117–156 (AENK…NLAT), 158–197 (DENK…NMTH), 199–238 (DENR…NIAV), 242–281 (NRKK…NLAS), 283–322 (SKYQ…NVSI), 324–364 (PANE…NLAA), 408–447 (DDLK…NLSS), and 456–495 (FNAV…QLLE). Disordered stretches follow at residues 519–558 (AKSP…EGEG) and 572–630 (EVGE…GRDR). The segment covering 543–558 (SEDEFEDGLTDQEGEG) has biased composition (acidic residues). Residues 598–607 (GQGQTSQVGS) are compositionally biased toward polar residues.

This sequence belongs to the beta-catenin family.

It is found in the vacuole membrane. Functions in both vacuole inheritance and protein targeting from the cytoplasm to vacuole. The polypeptide is Vacuolar protein 8 (VAC8) (Cryptococcus neoformans var. neoformans serotype D (strain B-3501A) (Filobasidiella neoformans)).